We begin with the raw amino-acid sequence, 206 residues long: N-(5'-phosphoribosyl)anthranilate isomerase (206 aa).

This sequence belongs to the TrpF family.

It carries out the reaction N-(5-phospho-beta-D-ribosyl)anthranilate = 1-(2-carboxyphenylamino)-1-deoxy-D-ribulose 5-phosphate. It participates in amino-acid biosynthesis; L-tryptophan biosynthesis; L-tryptophan from chorismate: step 3/5. The sequence is that of N-(5'-phosphoribosyl)anthranilate isomerase from Pseudomonas syringae pv. tomato (strain ATCC BAA-871 / DC3000).